A 331-amino-acid polypeptide reads, in one-letter code: MHNHNNRLVITPGEPAGVGPDLAITLAQQDWPVELVVCADPALLLARASQLNLPLQLREYQADQPAIAQQAGSLTILPVKTAVNVVPGKLDVGNSHYVVETLAKACDGAISGEFAALVTGPVQKSIINDAGIPFIGHTEFFADRSHCQRVVMMLATEELRVALATTHLPLLAVPGAITQASLHEVITILDNDLKTKFGITQPQIYVCGLNPHAGEGGHMGHEEIDTIIPALNTLRQQGINLIGPLPADTLFQPKYLQHADAVLAMYHDQGLPVLKYQGFGRAVNITLGLPFIRTSVDHGTALELAATGTADVGSFITALNLAIKMINNSNE.

Positions 137 and 138 each coordinate substrate. Residues H167, H212, and H267 each contribute to the a divalent metal cation site. Substrate is bound by residues K275, N284, and R293.

This sequence belongs to the PdxA family. As to quaternary structure, homodimer. The cofactor is Zn(2+). It depends on Mg(2+) as a cofactor. Co(2+) is required as a cofactor.

It is found in the cytoplasm. The enzyme catalyses 4-(phosphooxy)-L-threonine + NAD(+) = 3-amino-2-oxopropyl phosphate + CO2 + NADH. The protein operates within cofactor biosynthesis; pyridoxine 5'-phosphate biosynthesis; pyridoxine 5'-phosphate from D-erythrose 4-phosphate: step 4/5. In terms of biological role, catalyzes the NAD(P)-dependent oxidation of 4-(phosphooxy)-L-threonine (HTP) into 2-amino-3-oxo-4-(phosphooxy)butyric acid which spontaneously decarboxylates to form 3-amino-2-oxopropyl phosphate (AHAP). The polypeptide is 4-hydroxythreonine-4-phosphate dehydrogenase (Yersinia pestis bv. Antiqua (strain Angola)).